The chain runs to 101 residues: NAD(P)H-quinone oxidoreductase subunit 4L, chloroplastic (101 aa).

The next 3 membrane-spanning stretches (helical) occupy residues 2–22 (MLEH…YGLI), 32–52 (MCLE…SDFF), and 61–81 (IFSI…LAIV).

Belongs to the complex I subunit 4L family. As to quaternary structure, NDH is composed of at least 16 different subunits, 5 of which are encoded in the nucleus.

It localises to the plastid. Its subcellular location is the chloroplast thylakoid membrane. It catalyses the reaction a plastoquinone + NADH + (n+1) H(+)(in) = a plastoquinol + NAD(+) + n H(+)(out). It carries out the reaction a plastoquinone + NADPH + (n+1) H(+)(in) = a plastoquinol + NADP(+) + n H(+)(out). In terms of biological role, NDH shuttles electrons from NAD(P)H:plastoquinone, via FMN and iron-sulfur (Fe-S) centers, to quinones in the photosynthetic chain and possibly in a chloroplast respiratory chain. The immediate electron acceptor for the enzyme in this species is believed to be plastoquinone. Couples the redox reaction to proton translocation, and thus conserves the redox energy in a proton gradient. The sequence is that of NAD(P)H-quinone oxidoreductase subunit 4L, chloroplastic from Cicer arietinum (Chickpea).